We begin with the raw amino-acid sequence, 699 residues long: Elongation factor G (699 aa).

In terms of domain architecture, tr-type G spans 8 to 283 (EHIRNIGICA…AVVDFLPSPI (276 aa)). GTP-binding positions include 17–24 (AHIDAGKT), 81–85 (DTPGH), and 135–138 (NKMD).

The protein belongs to the TRAFAC class translation factor GTPase superfamily. Classic translation factor GTPase family. EF-G/EF-2 subfamily.

The protein resides in the cytoplasm. Catalyzes the GTP-dependent ribosomal translocation step during translation elongation. During this step, the ribosome changes from the pre-translocational (PRE) to the post-translocational (POST) state as the newly formed A-site-bound peptidyl-tRNA and P-site-bound deacylated tRNA move to the P and E sites, respectively. Catalyzes the coordinated movement of the two tRNA molecules, the mRNA and conformational changes in the ribosome. This chain is Elongation factor G, found in Rickettsia peacockii (strain Rustic).